A 758-amino-acid polypeptide reads, in one-letter code: 5-methyltetrahydropteroyltriglutamate--homocysteine methyltransferase (758 aa).

5-methyltetrahydropteroyltri-L-glutamate contacts are provided by residues arginine 16–lysine 19 and lysine 112. Residues isoleucine 433 to serine 435 and glutamate 486 contribute to the L-homocysteine site. Residues isoleucine 433–serine 435 and glutamate 486 contribute to the L-methionine site. 5-methyltetrahydropteroyltri-L-glutamate contacts are provided by residues arginine 517–cysteine 518 and tryptophan 563. An L-homocysteine-binding site is contributed by aspartate 601. An L-methionine-binding site is contributed by aspartate 601. Position 607 (glutamate 607) interacts with 5-methyltetrahydropteroyltri-L-glutamate. Histidine 643, cysteine 645, and glutamate 667 together coordinate Zn(2+). The active-site Proton donor is histidine 696. Cysteine 728 is a binding site for Zn(2+).

The protein belongs to the vitamin-B12 independent methionine synthase family. It depends on Zn(2+) as a cofactor.

It catalyses the reaction 5-methyltetrahydropteroyltri-L-glutamate + L-homocysteine = tetrahydropteroyltri-L-glutamate + L-methionine. It participates in amino-acid biosynthesis; L-methionine biosynthesis via de novo pathway; L-methionine from L-homocysteine (MetE route): step 1/1. In terms of biological role, catalyzes the transfer of a methyl group from 5-methyltetrahydrofolate to homocysteine resulting in methionine formation. In Neisseria meningitidis serogroup A / serotype 4A (strain DSM 15465 / Z2491), this protein is 5-methyltetrahydropteroyltriglutamate--homocysteine methyltransferase.